The primary structure comprises 110 residues: Large ribosomal subunit protein uL24 (110 aa).

Belongs to the universal ribosomal protein uL24 family. Part of the 50S ribosomal subunit.

One of two assembly initiator proteins, it binds directly to the 5'-end of the 23S rRNA, where it nucleates assembly of the 50S subunit. In terms of biological role, one of the proteins that surrounds the polypeptide exit tunnel on the outside of the subunit. This Caldicellulosiruptor saccharolyticus (strain ATCC 43494 / DSM 8903 / Tp8T 6331) protein is Large ribosomal subunit protein uL24.